The primary structure comprises 254 residues: Arginine transport ATP-binding protein ArgV (254 aa).

The ABC transporter domain occupies 6–250; that stretch reads IDAQQVCKNY…PKEQRTKDFL (245 aa). 38–45 contributes to the ATP binding site; that stretch reads GPSGSGKS.

Belongs to the ABC transporter superfamily. The complex is probably composed of two ATP-binding proteins (ArgV), two transmembrane proteins (ArgU) and a solute-binding protein (ArgT).

Its subcellular location is the cell membrane. It catalyses the reaction a polar amino acid(out) + ATP + H2O = a polar amino acid(in) + ADP + phosphate + H(+). The catalysed reaction is L-arginine(out) + ATP + H2O = L-arginine(in) + ADP + phosphate + H(+). Functionally, part of the ABC transporter complex ArgTUV involved in L-arginine import. May also transport L-citrulline. Probably responsible for energy coupling to the transport system. The chain is Arginine transport ATP-binding protein ArgV from Corynebacterium glutamicum (strain ATCC 13032 / DSM 20300 / JCM 1318 / BCRC 11384 / CCUG 27702 / LMG 3730 / NBRC 12168 / NCIMB 10025 / NRRL B-2784 / 534).